Consider the following 111-residue polypeptide: NADH-ubiquinone oxidoreductase chain 4 (111 aa).

A helical membrane pass occupies residues 35–55 (LITSLFSWLDITVFLTGLSAF).

The protein belongs to the complex I subunit 4 family.

It localises to the mitochondrion membrane. The enzyme catalyses a ubiquinone + NADH + 5 H(+)(in) = a ubiquinol + NAD(+) + 4 H(+)(out). Functionally, core subunit of the mitochondrial membrane respiratory chain NADH dehydrogenase (Complex I) that is believed to belong to the minimal assembly required for catalysis. Complex I functions in the transfer of electrons from NADH to the respiratory chain. The immediate electron acceptor for the enzyme is believed to be ubiquinone. This chain is NADH-ubiquinone oxidoreductase chain 4 (MT-ND4), found in Caiman crocodilus (Spectacled caiman).